Here is a 131-residue protein sequence, read N- to C-terminus: Mesogenin-1 (131 aa).

The disordered stretch occupies residues 22 to 79; that stretch reads EDRSFGDSASSPESESFDSACSSPDARSSPTAGCEHAEQQKPKVKMSMRRRMKASERE. Residues 27 to 45 are compositionally biased toward low complexity; it reads GDSASSPESESFDSACSSP. A compositionally biased stretch (basic residues) spans 63 to 73; the sequence is PKVKMSMRRRM. Positions 70-124 constitute a bHLH domain; that stretch reads RRRMKASEREKLRMRSLAEALHQLRDYLPPGYSRRGQPLTKIQTLKYTIQYIKEL.

Coexpression of ntl and spt is required for expression.

The protein resides in the nucleus. Its function is as follows. Involved in specifying the paraxial, but not dorsal, mesoderm. May regulate the expression of T-box transcription factors required for mesoderm formation and differentiation. The protein is Mesogenin-1 (msgn1) of Danio rerio (Zebrafish).